A 149-amino-acid polypeptide reads, in one-letter code: Glutamate mutase sigma subunit (149 aa).

The B12-binding domain maps to 3-140 (KATLVIGVIG…AHDINQRHDV (138 aa)). Adenosylcob(III)alamin contacts are provided by residues 13-17 (ADCHA), His16, 61-63 (SSI), and 93-97 (NLVVG).

This sequence belongs to the methylaspartate mutase GlmS subunit family. In terms of assembly, heterotetramer composed of 2 epsilon subunits (GlmE) and 2 sigma subunits (GlmS). GlmE exists as a homodimer and GlmS as a monomer. Adenosylcob(III)alamin serves as cofactor.

The enzyme catalyses (2S,3S)-3-methyl-L-aspartate = L-glutamate. Its pathway is amino-acid degradation; L-glutamate degradation via mesaconate pathway; acetate and pyruvate from L-glutamate: step 1/4. Functionally, catalyzes the carbon skeleton rearrangement of L-glutamate to L-threo-3-methylaspartate ((2S,3S)-3-methylaspartate). This Escherichia coli O157:H7 protein is Glutamate mutase sigma subunit.